Here is a 269-residue protein sequence, read N- to C-terminus: uncharacterized protein (269 aa).

The next 6 helical transmembrane spans lie at 21 to 43 (LNVW…ILFT), 48 to 70 (LFLI…FSLI), 121 to 143 (YLIL…VFTF), 147 to 166 (FIIA…FWII), 205 to 227 (SLEV…LFQF), and 242 to 264 (FVAF…YLLW).

The protein localises to the cell membrane. This is an uncharacterized protein from Aquifex aeolicus (strain VF5).